The sequence spans 304 residues: uncharacterized protein (304 aa).

Residue 72-79 (GPTGSGKT) participates in ATP binding.

This sequence belongs to the CbbQ/NirQ/NorQ/GpvN family.

This is an uncharacterized protein from Bacillus subtilis (strain 168).